The primary structure comprises 283 residues: Formamidopyrimidine-DNA glycosylase (283 aa).

The active-site Schiff-base intermediate with DNA is the Pro2. Glu3 (proton donor) is an active-site residue. Lys60 (proton donor; for beta-elimination activity) is an active-site residue. His100, Arg119, and Arg164 together coordinate DNA. The FPG-type zinc finger occupies Trp249 to Val283. Arg273 functions as the Proton donor; for delta-elimination activity in the catalytic mechanism.

This sequence belongs to the FPG family. In terms of assembly, monomer. Zn(2+) is required as a cofactor.

It catalyses the reaction Hydrolysis of DNA containing ring-opened 7-methylguanine residues, releasing 2,6-diamino-4-hydroxy-5-(N-methyl)formamidopyrimidine.. The enzyme catalyses 2'-deoxyribonucleotide-(2'-deoxyribose 5'-phosphate)-2'-deoxyribonucleotide-DNA = a 3'-end 2'-deoxyribonucleotide-(2,3-dehydro-2,3-deoxyribose 5'-phosphate)-DNA + a 5'-end 5'-phospho-2'-deoxyribonucleoside-DNA + H(+). Involved in base excision repair of DNA damaged by oxidation or by mutagenic agents. Acts as a DNA glycosylase that recognizes and removes damaged bases. Has a preference for oxidized purines, such as 7,8-dihydro-8-oxoguanine (8-oxoG). Has AP (apurinic/apyrimidinic) lyase activity and introduces nicks in the DNA strand. Cleaves the DNA backbone by beta-delta elimination to generate a single-strand break at the site of the removed base with both 3'- and 5'-phosphates. The chain is Formamidopyrimidine-DNA glycosylase from Nostoc sp. (strain PCC 7120 / SAG 25.82 / UTEX 2576).